Here is a 433-residue protein sequence, read N- to C-terminus: Signal recognition particle 54 kDa protein (433 aa).

GTP-binding positions include 106–113 (GVEGSGKT), 186–190 (DTAGR), and 244–247 (TKMD).

Belongs to the GTP-binding SRP family. SRP54 subfamily. As to quaternary structure, part of the signal recognition particle protein translocation system, which is composed of SRP and FtsY. Archaeal SRP consists of a 7S RNA molecule of 300 nucleotides and two protein subunits: SRP54 and SRP19.

It is found in the cytoplasm. The catalysed reaction is GTP + H2O = GDP + phosphate + H(+). In terms of biological role, involved in targeting and insertion of nascent membrane proteins into the cytoplasmic membrane. Binds to the hydrophobic signal sequence of the ribosome-nascent chain (RNC) as it emerges from the ribosomes. The SRP-RNC complex is then targeted to the cytoplasmic membrane where it interacts with the SRP receptor FtsY. This Pyrobaculum neutrophilum (strain DSM 2338 / JCM 9278 / NBRC 100436 / V24Sta) (Thermoproteus neutrophilus) protein is Signal recognition particle 54 kDa protein.